The chain runs to 373 residues: Protein-glutamate methylesterase/protein-glutamine glutaminase 1 (373 aa).

The Response regulatory domain occupies 16 to 133 (RVVVVDDSAL…ASGLTELSDQ (118 aa)). At Asp67 the chain carries 4-aspartylphosphate. The CheB-type methylesterase domain occupies 175–367 (RVSTEKLICI…PALIAKLSSA (193 aa)). Catalysis depends on residues Ser187, His213, and Asp309.

This sequence belongs to the CheB family. Phosphorylated by CheA. Phosphorylation of the N-terminal regulatory domain activates the methylesterase activity.

It localises to the cytoplasm. It carries out the reaction [protein]-L-glutamate 5-O-methyl ester + H2O = L-glutamyl-[protein] + methanol + H(+). The enzyme catalyses L-glutaminyl-[protein] + H2O = L-glutamyl-[protein] + NH4(+). Involved in chemotaxis. Part of a chemotaxis signal transduction system that modulates chemotaxis in response to various stimuli. Catalyzes the demethylation of specific methylglutamate residues introduced into the chemoreceptors (methyl-accepting chemotaxis proteins or MCP) by CheR. Also mediates the irreversible deamidation of specific glutamine residues to glutamic acid. The polypeptide is Protein-glutamate methylesterase/protein-glutamine glutaminase 1 (Albidiferax ferrireducens (strain ATCC BAA-621 / DSM 15236 / T118) (Rhodoferax ferrireducens)).